Here is a 957-residue protein sequence, read N- to C-terminus: Glycine dehydrogenase (decarboxylating) (957 aa).

At Lys-708 the chain carries N6-(pyridoxal phosphate)lysine.

It belongs to the GcvP family. In terms of assembly, the glycine cleavage system is composed of four proteins: P, T, L and H. The cofactor is pyridoxal 5'-phosphate.

It catalyses the reaction N(6)-[(R)-lipoyl]-L-lysyl-[glycine-cleavage complex H protein] + glycine + H(+) = N(6)-[(R)-S(8)-aminomethyldihydrolipoyl]-L-lysyl-[glycine-cleavage complex H protein] + CO2. Its function is as follows. The glycine cleavage system catalyzes the degradation of glycine. The P protein binds the alpha-amino group of glycine through its pyridoxal phosphate cofactor; CO(2) is released and the remaining methylamine moiety is then transferred to the lipoamide cofactor of the H protein. The polypeptide is Glycine dehydrogenase (decarboxylating) (Salmonella agona (strain SL483)).